A 306-amino-acid chain; its full sequence is 1-aminocyclopropane-1-carboxylate oxidase (306 aa).

The Fe2OG dioxygenase domain maps to 153–253; the sequence is PFFGTKVSHY…RRSIASFYNP (101 aa). Residues histidine 177, aspartate 179, and histidine 234 each coordinate Fe cation.

Belongs to the iron/ascorbate-dependent oxidoreductase family. Fe cation is required as a cofactor.

The enzyme catalyses 1-aminocyclopropane-1-carboxylate + L-ascorbate + O2 = ethene + L-dehydroascorbate + hydrogen cyanide + CO2 + 2 H2O. The protein operates within alkene biosynthesis; ethylene biosynthesis via S-adenosyl-L-methionine; ethylene from S-adenosyl-L-methionine: step 2/2. This chain is 1-aminocyclopropane-1-carboxylate oxidase (MAO1B), found in Musa acuminata (Banana).